The sequence spans 360 residues: Secreted LysM effector LysM2 (360 aa).

The first 21 residues, 1–21 (MKISSLSILPLLGVVSAGIHG), serve as a signal peptide directing secretion. The region spanning 37–85 (TWYLDLVDDSYTCENIESQWDLSHEAFVAWNPGVKKDCSGLKVGLSVCV) is the LysM 1 domain. Low complexity predominate over residues 94–113 (ATPTSEASTSSETSSASPTA). Residues 94-125 (ATPTSEASTSSETSSASPTASRPPLPSPTQDG) form a disordered region. A glycan (N-linked (GlcNAc...) asparagine) is linked at Asn-129. A LysM 2 domain is found at 132 to 179 (KFHQAVSGDTCSKIISRYKPITLDQFIEWNPALEKDCSGLWSGYYYCV). Asn-204 carries an N-linked (GlcNAc...) asparagine glycan. 2 LysM domains span residues 225 to 272 (RWHK…YYCI) and 311 to 357 (KWHQ…YVCV).

This sequence belongs to the secreted LysM effector family.

It is found in the secreted. The protein resides in the cell wall. In terms of biological role, secreted effector that binds two substrates, chitin and N-linked oligosaccharides associated with human skin glycoproteins. Could provide the pathogen with three important functions including shielding host cell wall chitin from the human immune system, shielding the pathogen's glycoproteins from host degradation and immune surveillance, and helping facilitate pathogen adhesion to human skin. The sequence is that of Secreted LysM effector LysM2 from Trichophyton rubrum (strain ATCC MYA-4607 / CBS 118892) (Athlete's foot fungus).